The primary structure comprises 791 residues: Putative inactive tyrosine-protein kinase Wsck (791 aa).

The first 26 residues, 1-26 (MECGSHSGHRPIPIWLSSCLVAMCLG), serve as a signal peptide directing secretion. Residues 27–401 (LPLGAAVPQE…YATFEKGQSS (375 aa)) lie on the Extracellular side of the membrane. The region spanning 39–125 (AYYYVGCYTA…VGVHSYYSTI (87 aa)) is the WSC domain. Residues 131–246 (GPHHLRISNK…ASIEATTEVG (116 aa)) enclose the Fibronectin type-III domain. N-linked (GlcNAc...) asparagine glycans are attached at residues Asn-139, Asn-217, and Asn-329. A helical transmembrane segment spans residues 402-422 (VVALAVTCVIFGSCLLLSLIA). At 423-791 (YFYLRYKTCR…PQLEAVATMG (369 aa)) the chain is on the cytoplasmic side. Positions 493–758 (LNVNDVIGDG…DVAFGVRQLM (266 aa)) constitute a Protein kinase domain. 499–507 (IGDGRFGEI) provides a ligand contact to ATP.

This sequence belongs to the protein kinase superfamily. Tyr protein kinase family.

It localises to the membrane. Probably lacks tyrosine-protein kinase activity. The protein is Putative inactive tyrosine-protein kinase Wsck of Drosophila melanogaster (Fruit fly).